A 338-amino-acid chain; its full sequence is Pyridoxal 5'-phosphate synthase subunit PdxS (338 aa).

A D-ribose 5-phosphate-binding site is contributed by aspartate 66. Lysine 123 functions as the Schiff-base intermediate with D-ribose 5-phosphate in the catalytic mechanism. Glycine 195 is a binding site for D-ribose 5-phosphate. Lysine 207 provides a ligand contact to D-glyceraldehyde 3-phosphate. Residues glycine 256 and 277–278 (GS) each bind D-ribose 5-phosphate.

It belongs to the PdxS/SNZ family. In terms of assembly, in the presence of PdxT, forms a dodecamer of heterodimers.

It catalyses the reaction aldehydo-D-ribose 5-phosphate + D-glyceraldehyde 3-phosphate + L-glutamine = pyridoxal 5'-phosphate + L-glutamate + phosphate + 3 H2O + H(+). It participates in cofactor biosynthesis; pyridoxal 5'-phosphate biosynthesis. Its function is as follows. Catalyzes the formation of pyridoxal 5'-phosphate from ribose 5-phosphate (RBP), glyceraldehyde 3-phosphate (G3P) and ammonia. The ammonia is provided by the PdxT subunit. Can also use ribulose 5-phosphate and dihydroxyacetone phosphate as substrates, resulting from enzyme-catalyzed isomerization of RBP and G3P, respectively. This is Pyridoxal 5'-phosphate synthase subunit PdxS from Saccharolobus islandicus (strain L.S.2.15 / Lassen #1) (Sulfolobus islandicus).